The sequence spans 681 residues: Kojibiose hydrolase (681 aa).

Residues 1 to 23 (MKKYIFNHVFFFLMLCGSNYLYS) form the signal peptide. Beta-D-glucose contacts are provided by arginine 74, tryptophan 343, aspartate 344, tryptophan 391, glutamate 392, threonine 407, glutamate 472, tryptophan 473, lysine 538, glutamine 539, and aspartate 573. Catalysis depends on glutamate 472, which acts as the Proton donor. Catalysis depends on glutamate 616, which acts as the Proton acceptor.

It belongs to the glycosyl hydrolase 65 family. As to quaternary structure, homohexamer; dimer of trimers.

It localises to the periplasm. The catalysed reaction is kojibiose + H2O = beta-D-glucose + D-glucose. Its function is as follows. Glycosidase that specifically hydrolyzes kojibiose to beta-glucose and glucose. Also hydrolyzes, with lower catalytic efficiency, longer kojioligosaccharides (from kojitriose to kojipentaose) and shorter oligosaccharides produced by the degradation of dextran-containing alpha-1,2 branches. Probably acts on alpha-(1-&gt;2)-glucosyl isomaltooligosaccharides. Shows weak activity with nigerose but has no activity toward p-nitrophenyl alpha-glucopyranoside, which is a general substrate of exo-acting alpha-glucoside hydrolases. Has a strict specificity for alpha-1,2-glucosidic linkages. Catalyzes the hydrolytic reaction via an anomer-inverting mechanism. This is Kojibiose hydrolase from Flavobacterium johnsoniae (strain ATCC 17061 / DSM 2064 / JCM 8514 / BCRC 14874 / CCUG 350202 / NBRC 14942 / NCIMB 11054 / UW101) (Cytophaga johnsonae).